The chain runs to 555 residues: Glutamine--tRNA ligase (555 aa).

A 'HIGH' region motif is present at residues 34–44 (PEPNGYLHIGH). Residues 35 to 37 (EPN) and 41 to 47 (HIGHAKS) each bind ATP. Positions 67 and 212 each coordinate L-glutamine. ATP contacts are provided by residues threonine 231, 261–262 (RL), and 269–271 (MSK). The 'KMSKS' region motif lies at 268-272 (VMSKR). The interaction with tRNA stretch occupies residues 317-324 (TKQDNTIE).

The protein belongs to the class-I aminoacyl-tRNA synthetase family. As to quaternary structure, monomer.

Its subcellular location is the cytoplasm. The catalysed reaction is tRNA(Gln) + L-glutamine + ATP = L-glutaminyl-tRNA(Gln) + AMP + diphosphate. This Salmonella newport (strain SL254) protein is Glutamine--tRNA ligase.